Reading from the N-terminus, the 385-residue chain is Serine/threonine-protein kinase H2 (385 aa).

Positions 63 to 320 (YDIKALIGTG…AGQALDHPWV (258 aa)) constitute a Protein kinase domain. Residues 69–77 (IGTGSFSRV) and lysine 92 each bind ATP. The tract at residues 342 to 367 (QRASPHSQSPGSAQSSKSHYSHKSRH) is disordered. The segment covering 344–359 (ASPHSQSPGSAQSSKS) has biased composition (low complexity).

Belongs to the protein kinase superfamily. CAMK Ser/Thr protein kinase family.

The catalysed reaction is L-seryl-[protein] + ATP = O-phospho-L-seryl-[protein] + ADP + H(+). It carries out the reaction L-threonyl-[protein] + ATP = O-phospho-L-threonyl-[protein] + ADP + H(+). This is Serine/threonine-protein kinase H2 (PSKH2) from Homo sapiens (Human).